The primary structure comprises 368 residues: Glutaminyl-peptide cyclotransferase (368 aa).

The signal sequence occupies residues 1-33 (MARERRDSKAATFFCLAWALCLALPGFPQHVSG). Asn-53 carries N-linked (GlcNAc...) asparagine glycosylation. A disulfide bridge connects residues Cys-143 and Cys-169. Asp-164 serves as a coordination point for Zn(2+). Catalysis depends on Glu-207, which acts as the Proton acceptor. Glu-208 serves as a coordination point for Zn(2+). Catalysis depends on Asp-254, which acts as the Proton acceptor. Asn-292 carries N-linked (GlcNAc...) asparagine glycosylation. His-336 is a binding site for Zn(2+). Residue Asn-352 is glycosylated (N-linked (GlcNAc...) asparagine).

Belongs to the glutaminyl-peptide cyclotransferase family. In terms of tissue distribution, expressed by the venom gland.

It localises to the secreted. The catalysed reaction is N-terminal L-glutaminyl-[peptide] = N-terminal 5-oxo-L-prolyl-[peptide] + NH4(+). In terms of biological role, responsible for the biosynthesis of pyroglutamyl peptides. Has a bias against acidic and tryptophan residues adjacent to the N-terminal glutaminyl residue and a lack of importance of chain length after the second residue. Also catalyzes N-terminal pyroglutamate formation. This chain is Glutaminyl-peptide cyclotransferase (QPCT), found in Gloydius blomhoffii (Mamushi).